The sequence spans 603 residues: D-3-phosphoglycerate dehydrogenase 1, chloroplastic (603 aa).

Residues 1–54 constitute a chloroplast transit peptide; sequence MSATAAASSSIAVATNSLRNVTLSSRSPLPSAISVAFPSRGRNTLQRRLVLVSC. NAD(+) contacts are provided by residues 210-211, Asp230, 289-291, and Asp315; these read KV and VAR. Arg291 is an active-site residue. Glu320 is an active-site residue. His339 (proton donor) is an active-site residue. 339–342 is an NAD(+) binding site; the sequence is HLGA. The region spanning 531-603 is the ACT domain; the sequence is IILCRQVDQP…AVEEFVFLKL (73 aa).

The protein belongs to the D-isomer specific 2-hydroxyacid dehydrogenase family. As to expression, ubiquitous, but highly expressed in roots. Expressed in vasculature, root and shoot meristems, distal part of cotyledons and leaves, anther, stigma and pollen grains. Detected at the tip of the cotyledons in late embryos.

Its subcellular location is the plastid. It localises to the chloroplast. It catalyses the reaction (2R)-3-phosphoglycerate + NAD(+) = 3-phosphooxypyruvate + NADH + H(+). Its pathway is amino-acid biosynthesis; L-serine biosynthesis; L-serine from 3-phospho-D-glycerate: step 1/3. Partially inhibited by 5 mM serine. Its function is as follows. Involved in the plastidial phosphorylated pathway of serine biosynthesis (PPSB). Required for mature pollen development. This is D-3-phosphoglycerate dehydrogenase 1, chloroplastic (PGDH1) from Arabidopsis thaliana (Mouse-ear cress).